Here is a 124-residue protein sequence, read N- to C-terminus: Fluoride-specific ion channel FluC (124 aa).

A run of 4 helical transmembrane segments spans residues 4 to 24 (IFYIALGGGLGSVLRYLTTLV), 35 to 55 (YATFVTNIAGCLLIGLFFGYL), 63 to 83 (PYLKFFLITGLCGGYTTFSAF), and 96 to 116 (ILIAFLYISLSVFLGLMATWT). The Na(+) site is built by Gly-75 and Thr-78.

The protein belongs to the fluoride channel Fluc/FEX (TC 1.A.43) family.

Its subcellular location is the cell inner membrane. It catalyses the reaction fluoride(in) = fluoride(out). With respect to regulation, na(+) is not transported, but it plays an essential structural role and its presence is essential for fluoride channel function. Functionally, fluoride-specific ion channel. Important for reducing fluoride concentration in the cell, thus reducing its toxicity. The polypeptide is Fluoride-specific ion channel FluC (Flavobacterium psychrophilum (strain ATCC 49511 / DSM 21280 / CIP 103535 / JIP02/86)).